Consider the following 187-residue polypeptide: UPF0301 protein VF_0434 (187 aa).

The protein belongs to the UPF0301 (AlgH) family.

This chain is UPF0301 protein VF_0434, found in Aliivibrio fischeri (strain ATCC 700601 / ES114) (Vibrio fischeri).